Here is a 196-residue protein sequence, read N- to C-terminus: dTTP/UTP pyrophosphatase (196 aa).

Aspartate 72 (proton acceptor) is an active-site residue.

This sequence belongs to the Maf family. YhdE subfamily. A divalent metal cation serves as cofactor.

It is found in the cytoplasm. It catalyses the reaction dTTP + H2O = dTMP + diphosphate + H(+). It carries out the reaction UTP + H2O = UMP + diphosphate + H(+). Functionally, nucleoside triphosphate pyrophosphatase that hydrolyzes dTTP and UTP. May have a dual role in cell division arrest and in preventing the incorporation of modified nucleotides into cellular nucleic acids. The chain is dTTP/UTP pyrophosphatase from Chlamydia caviae (strain ATCC VR-813 / DSM 19441 / 03DC25 / GPIC) (Chlamydophila caviae).